Here is a 150-residue protein sequence, read N- to C-terminus: 3-hydroxyacyl-[acyl-carrier-protein] dehydratase FabZ (150 aa).

The active site involves His57.

It belongs to the thioester dehydratase family. FabZ subfamily.

Its subcellular location is the cytoplasm. It carries out the reaction a (3R)-hydroxyacyl-[ACP] = a (2E)-enoyl-[ACP] + H2O. Its function is as follows. Involved in unsaturated fatty acids biosynthesis. Catalyzes the dehydration of short chain beta-hydroxyacyl-ACPs and long chain saturated and unsaturated beta-hydroxyacyl-ACPs. The chain is 3-hydroxyacyl-[acyl-carrier-protein] dehydratase FabZ from Actinobacillus succinogenes (strain ATCC 55618 / DSM 22257 / CCUG 43843 / 130Z).